A 296-amino-acid polypeptide reads, in one-letter code: Aldo-keto reductase MYCFIDRAFT_156381 (296 aa).

Aspartate 14 contacts NADP(+). Tyrosine 19 (proton donor) is an active-site residue. Residue histidine 83 participates in substrate binding. NADP(+) contacts are provided by residues cysteine 113–asparagine 114, glutamine 139, serine 168–arginine 178, and arginine 191. Residue tyrosine 201 coordinates substrate. Residue serine 255 to asparagine 263 coordinates NADP(+).

Belongs to the aldo/keto reductase family. Aldo/keto reductase 2 subfamily.

Its pathway is secondary metabolite biosynthesis. Functionally, aldo-keto reductase; part of the gene cluster that mediates the biosynthesis of an emodin derivative that may be involved in black Sigatoka disease of banana. The pathway begins with the synthesis of atrochrysone thioester by the polyketide synthase PKS8-1. The atrochrysone carboxyl ACP thioesterase MYCFIDRAFT_190111 then breaks the thioester bond and releases the atrochrysone carboxylic acid from PKS8-1. The decarboxylase MYCFIDRAFT_34057 then catalyzes the concerted decarboxylation-elimination required to convert atochrysone carboxylic acid into emodin anthrone, which is further oxidized to emodin by the anthrone oxygenase MYCFIDRAFT_34418. The functions of the other tailoring enzymes as well as the final product of the cluster have still to be identified. This chain is Aldo-keto reductase MYCFIDRAFT_156381, found in Pseudocercospora fijiensis (strain CIRAD86) (Black leaf streak disease fungus).